We begin with the raw amino-acid sequence, 236 residues long: Purine nucleoside phosphorylase DeoD-type (236 aa).

His-5 contacts a purine D-ribonucleoside. Phosphate-binding positions include Gly-21, Arg-25, Arg-44, and 88–91 (RVGT). A purine D-ribonucleoside-binding positions include 180–182 (EME) and 204–205 (SD). The active-site Proton donor is the Asp-205.

This sequence belongs to the PNP/UDP phosphorylase family. As to quaternary structure, homohexamer; trimer of homodimers.

The enzyme catalyses a purine D-ribonucleoside + phosphate = a purine nucleobase + alpha-D-ribose 1-phosphate. It carries out the reaction a purine 2'-deoxy-D-ribonucleoside + phosphate = a purine nucleobase + 2-deoxy-alpha-D-ribose 1-phosphate. Its function is as follows. Catalyzes the reversible phosphorolytic breakdown of the N-glycosidic bond in the beta-(deoxy)ribonucleoside molecules, with the formation of the corresponding free purine bases and pentose-1-phosphate. This chain is Purine nucleoside phosphorylase DeoD-type, found in Shewanella denitrificans (strain OS217 / ATCC BAA-1090 / DSM 15013).